The primary structure comprises 545 residues: Chaperonin GroEL (545 aa).

Residues 30–33, K51, 87–91, G415, and D495 each bind ATP; these read TLGP and DGTTT.

This sequence belongs to the chaperonin (HSP60) family. In terms of assembly, forms a cylinder of 14 subunits composed of two heptameric rings stacked back-to-back. Interacts with the co-chaperonin GroES.

Its subcellular location is the cytoplasm. It catalyses the reaction ATP + H2O + a folded polypeptide = ADP + phosphate + an unfolded polypeptide.. In terms of biological role, together with its co-chaperonin GroES, plays an essential role in assisting protein folding. The GroEL-GroES system forms a nano-cage that allows encapsulation of the non-native substrate proteins and provides a physical environment optimized to promote and accelerate protein folding. The polypeptide is Chaperonin GroEL (Shewanella oneidensis (strain ATCC 700550 / JCM 31522 / CIP 106686 / LMG 19005 / NCIMB 14063 / MR-1)).